A 1452-amino-acid chain; its full sequence is Pleiotropic drug resistance protein 1 (1452 aa).

In terms of domain architecture, ABC transporter 1 spans 152-425; sequence LNYLHILPNR…FEYMGFICPE (274 aa). Position 185 to 192 (185 to 192) interacts with ATP; that stretch reads GPPSSGKT. Positions 504-716 constitute an ABC transmembrane type-2 1 domain; sequence LLKACTAREY…AQNAIAVNEF (213 aa). The next 7 membrane-spanning stretches (helical) occupy residues 521–541, 554–574, 609–629, 640–660, 664–684, 694–714, and 753–773; these read FVYIFKMIQLTLMASITMTLF, GAVFLGALFYALIMIMFNGFS, IPITLVEVAIWVCMTYYVIGF, LLLLICVNQMASGLFRLMGAL, IIVANTFGSFVLLTVLVMGGF, WWIWGYWISPMMYAQNAIAVN, and IGAGALIGYVFLFNFLFAVAL. The disordered stretch occupies residues 808–830; sequence LGKSSSEKGNDVRRSASSRSMSS. Positions 812-821 are enriched in basic and acidic residues; it reads SSEKGNDVRR. The ABC transporter 2 domain maps to 855 to 1107; it reads ITFDDIRYAV…HLIKYFEGID (253 aa). Position 900-907 (900-907) interacts with ATP; the sequence is GVSGAGKT. One can recognise an ABC transmembrane type-2 2 domain in the interval 1180–1394; sequence TQCMACFWKQ…TLYGLIASQF (215 aa). Transmembrane regions (helical) follow at residues 1199-1219, 1239-1259, 1287-1307, 1314-1334, 1344-1364, 1375-1395, and 1421-1441; these read YTAVRIMFTFFIALMFGTIFW, YIAVLFLGVQNATTVQPVIAI, LPYLFLQTIIYGVIVYAMIGF, FFWYLFFMYFTLLYFTLYGMM, IAAIISSAFYAVWNLFCGFIV, WYYYICPISWTLYGLIASQFG, and FVGYVALILVGISVLFLFIFA.

Belongs to the ABC transporter superfamily. ABCG family. PDR (TC 3.A.1.205) subfamily. Expressed in root hypodermal passage cells. Expressed in stem tissues, particularly the vasculature and nodes adjacent to leaf axils.

The protein localises to the cell membrane. In terms of biological role, cellular strigolactone (SL) transporter required for the exudation of SL from the root to the soil. The presence of SL in the vicinity of the roots is required for development of symbiotic interactions with arbuscular mycorrhizal fungi (AMF). Transports SL in the above ground tissues and is required for the control of shoot branching. SL regulates plant shoot architecture by inhibiting the outgrowth of axillary buds. Involved in the regulation of shootward and outward directional strigolactone transport in roots. Due to its polar localization in root cells, mediates directional shootward strigolactone transport, as well as localized outward directional transport for exudation to the soil. In Petunia hybrida (Petunia), this protein is Pleiotropic drug resistance protein 1.